The primary structure comprises 242 residues: Pyridoxine 5'-phosphate synthase (242 aa).

Residue Asn-6 coordinates 3-amino-2-oxopropyl phosphate. 8–9 is a binding site for 1-deoxy-D-xylulose 5-phosphate; the sequence is DH. Arg-17 is a binding site for 3-amino-2-oxopropyl phosphate. Catalysis depends on His-42, which acts as the Proton acceptor. 2 residues coordinate 1-deoxy-D-xylulose 5-phosphate: Arg-44 and His-49. Glu-69 acts as the Proton acceptor in catalysis. Thr-99 contributes to the 1-deoxy-D-xylulose 5-phosphate binding site. His-190 functions as the Proton donor in the catalytic mechanism. Residues Gly-191 and 212–213 contribute to the 3-amino-2-oxopropyl phosphate site; that span reads GH.

This sequence belongs to the PNP synthase family. As to quaternary structure, homooctamer; tetramer of dimers.

The protein localises to the cytoplasm. It catalyses the reaction 3-amino-2-oxopropyl phosphate + 1-deoxy-D-xylulose 5-phosphate = pyridoxine 5'-phosphate + phosphate + 2 H2O + H(+). It functions in the pathway cofactor biosynthesis; pyridoxine 5'-phosphate biosynthesis; pyridoxine 5'-phosphate from D-erythrose 4-phosphate: step 5/5. In terms of biological role, catalyzes the complicated ring closure reaction between the two acyclic compounds 1-deoxy-D-xylulose-5-phosphate (DXP) and 3-amino-2-oxopropyl phosphate (1-amino-acetone-3-phosphate or AAP) to form pyridoxine 5'-phosphate (PNP) and inorganic phosphate. The chain is Pyridoxine 5'-phosphate synthase from Neisseria meningitidis serogroup C.